A 198-amino-acid polypeptide reads, in one-letter code: MQLQINIASHPLIQHWSGILKNDNNPGTILRTACSELGKWITYEIMREWLVTETIELKANTTISLISSHYKYIIVIIMPYGFILAEGARSLLPTANIVLVNYNDIINNVPDQLNSFTKILVLDLFLDEATITPLLNDFIKKGAVLSNIKIACLECGTSQLNQLGQIWSKLEIYTTKVNTNVDKEKCSREDDFKDKFFV.

The protein belongs to the UPRTase family.

The protein resides in the plastid. The protein localises to the chloroplast. The protein is Uracil phosphoribosyltransferase homolog of Pyropia yezoensis (Susabi-nori).